The primary structure comprises 285 residues: 2-dehydro-3-deoxyphosphooctonate aldolase (285 aa).

Belongs to the KdsA family.

It localises to the cytoplasm. The enzyme catalyses D-arabinose 5-phosphate + phosphoenolpyruvate + H2O = 3-deoxy-alpha-D-manno-2-octulosonate-8-phosphate + phosphate. It participates in carbohydrate biosynthesis; 3-deoxy-D-manno-octulosonate biosynthesis; 3-deoxy-D-manno-octulosonate from D-ribulose 5-phosphate: step 2/3. The protein operates within bacterial outer membrane biogenesis; lipopolysaccharide biosynthesis. The chain is 2-dehydro-3-deoxyphosphooctonate aldolase from Acinetobacter baylyi (strain ATCC 33305 / BD413 / ADP1).